We begin with the raw amino-acid sequence, 96 residues long: Large ribosomal subunit protein eL43 (96 aa).

The C4-type zinc finger occupies 41 to 62; it reads CPVCGFMKLKRISTSIWECKKC.

The protein belongs to the eukaryotic ribosomal protein eL43 family. Requires Zn(2+) as cofactor.

The sequence is that of Large ribosomal subunit protein eL43 from Methanococcus aeolicus (strain ATCC BAA-1280 / DSM 17508 / OCM 812 / Nankai-3).